The following is a 315-amino-acid chain: Protein translocase subunit SecF (315 aa).

6 consecutive transmembrane segments (helical) span residues A12–A32, A136–L156, V166–F186, L188–F208, S247–D267, and F271–A291.

This sequence belongs to the SecD/SecF family. SecF subfamily. As to quaternary structure, forms a complex with SecD. Part of the essential Sec protein translocation apparatus which comprises SecA, SecYEG and auxiliary proteins SecDF. Other proteins may also be involved.

The protein resides in the cell inner membrane. In terms of biological role, part of the Sec protein translocase complex. Interacts with the SecYEG preprotein conducting channel. SecDF uses the proton motive force (PMF) to complete protein translocation after the ATP-dependent function of SecA. Functionally, probably participates in protein translocation into and across both the cytoplasmic and thylakoid membranes in cyanobacterial cells. The polypeptide is Protein translocase subunit SecF (Synechocystis sp. (strain ATCC 27184 / PCC 6803 / Kazusa)).